The primary structure comprises 946 residues: Serine/threonine-protein kinase PLK4 (946 aa).

In terms of domain architecture, Protein kinase spans 12–265; it reads FKVLNLLGKG…LSSVLDHAFM (254 aa). ATP-binding positions include 18–26 and lysine 41; that span reads LGKGSFACV. Aspartate 136 serves as the catalytic Proton acceptor. Residues 330 to 395 form a disordered region; it reads HPAERSNGGS…TYGKPSSFSE (66 aa). Polar residues predominate over residues 378-394; it reads RSGTSQSQTYGKPSSFS. In terms of domain architecture, Cryptic POLO box 1 (CPB1) spans 566–679; the sequence is TLRSIISPLN…AKFIQLVRSK (114 aa). One can recognise a Cryptic POLO box 2 (CPB2) domain in the interval 680 to 792; that stretch reads MPKVTYYTRY…GRRPAITESP (113 aa). The segment at 789 to 828 is disordered; that stretch reads TESPRTQLTVDSARERKDEQSSANRVLHSSATSPPQIPNI. Residues 809–828 are compositionally biased toward polar residues; that stretch reads SSANRVLHSSATSPPQIPNI. The 79-residue stretch at 864–942 folds into the POLO box domain; that stretch reads QVLKSVFVEN…LSSILMLFAS (79 aa).

Belongs to the protein kinase superfamily. Ser/Thr protein kinase family. CDC5/Polo subfamily. Homodimer. Post-translationally, ubiquitinated; leading to its degradation by the proteasome.

The protein resides in the cytoplasm. It localises to the cytoskeleton. It is found in the microtubule organizing center. Its subcellular location is the centrosome. The protein localises to the centriole. It catalyses the reaction L-seryl-[protein] + ATP = O-phospho-L-seryl-[protein] + ADP + H(+). The catalysed reaction is L-threonyl-[protein] + ATP = O-phospho-L-threonyl-[protein] + ADP + H(+). Serine/threonine-protein kinase that plays a central role in centriole duplication. Able to trigger procentriole formation on the surface of the parental centriole cylinder, leading to the recruitment of centriole biogenesis proteins such as sass6, cpap, ccp110, cep135 and gamma-tubulin. When overexpressed, it is able to induce centrosome amplification through the simultaneous generation of multiple procentrioles adjoining each parental centriole during S phase. Its central role in centriole replication suggests a possible role in tumorigenesis, centrosome aberrations being frequently observed in tumors. Also involved in deuterosome-mediated centriole amplification in multiciliated that can generate more than 100 centrioles. In Xenopus tropicalis (Western clawed frog), this protein is Serine/threonine-protein kinase PLK4.